Reading from the N-terminus, the 108-residue chain is uncharacterized protein (108 aa).

Residues 1 to 20 (MNLKSIIFVLFIAFFAFSLA) form the signal peptide. Asparagine 39 carries an N-linked (GlcNAc...) asparagine glycan.

This sequence belongs to the Dictyostelium gerABC family.

The protein resides in the secreted. This is an uncharacterized protein from Dictyostelium discoideum (Social amoeba).